A 139-amino-acid polypeptide reads, in one-letter code: Peptide methionine sulfoxide reductase B5 (139 aa).

The residue at position 2 (Ala2) is an N-acetylalanine. The region spanning 12–133 (EEEWRAVLSP…NSVSISFNPA (122 aa)) is the MsrB domain. Zn(2+)-binding residues include Cys51, Cys54, Cys97, and Cys100. Cys69 and Cys122 form a disulfide bridge. Cys122 serves as the catalytic Nucleophile.

This sequence belongs to the MsrB Met sulfoxide reductase family. Zn(2+) is required as a cofactor.

The protein resides in the cytoplasm. It localises to the cytosol. It carries out the reaction L-methionyl-[protein] + [thioredoxin]-disulfide + H2O = L-methionyl-(R)-S-oxide-[protein] + [thioredoxin]-dithiol. Catalyzes the reduction of methionine sulfoxide (MetSO) to methionine in proteins. Plays a protective role against oxidative stress by restoring activity to proteins that have been inactivated by methionine oxidation. MSRB family specifically reduces the MetSO R-enantiomer. This chain is Peptide methionine sulfoxide reductase B5 (MSRB5), found in Arabidopsis thaliana (Mouse-ear cress).